The chain runs to 855 residues: Potassium channel AKT2 (855 aa).

Residues 1-12 (MKTSSFESASSS) are compositionally biased toward low complexity. A disordered region spans residues 1–24 (MKTSSFESASSSGGSGGGGGGGGG). Topologically, residues 1-75 (MKTSSFESAS…PLDSRYRCWD (75 aa)) are cytoplasmic. Gly residues predominate over residues 13–24 (GGSGGGGGGGGG). Residues 76–96 (TFMVVLVAYSAWVYPFEVAFM) form a helical membrane-spanning segment. Residues 97–105 (NASPKGGLE) are Extracellular-facing. Residues 106-126 (VADIVVDLFFAVDIVLTFFVA) form a helical membrane-spanning segment. Topologically, residues 127–149 (YIDSRTQLLVRDRRRIATRYLST) are cytoplasmic. A helical transmembrane segment spans residues 150–170 (FFIMDVASTIPFQGLAYIVTG). Residues 171–179 (EVRESPAFS) lie on the Extracellular side of the membrane. A helical; Voltage-sensor membrane pass occupies residues 180–200 (LLGILRLWRLRKVKQFFTRLE). Topologically, residues 201 to 214 (KDIRFNYFWIRCAR) are cytoplasmic. Residues 215-235 (LIAVTLFLVHCAGCLYYLIAD) form a helical membrane-spanning segment. At 236-262 (RYPHREKTWIGAVIPDFQEASLWIRYT) the chain is on the extracellular side. The pore-forming intramembrane region spans 263–282 (SSVYWSITTMTTVGYGDMHA). The Extracellular segment spans residues 283–285 (QNT). Residues 286 to 306 (VEMIFNIFYMLFNLGLTAYLI) form a helical membrane-spanning segment. Residues 307-855 (GNMTNLVVEG…VASMDSVSGS (549 aa)) lie on the Cytoplasmic side of the membrane. 391-511 (LFKGVSREVL…VVIIKNFLKH (121 aa)) is an a nucleoside 3',5'-cyclic phosphate binding site. ANK repeat units follow at residues 536–565 (NIPC…DPDV), 569–598 (KGRT…NVNI), 602–631 (QGNT…VSSP), 634–663 (AAGD…AVDS), and 667–696 (DGAT…SVDR). A disordered region spans residues 744–765 (EVGSSGDSRNGRRQSARSDGAH). The KHA domain maps to 768–855 (RVSIYRGHPF…VASMDSVSGS (88 aa)).

The protein belongs to the potassium channel family. Plant (TC 1.A.1.4) subfamily. The potassium channel is probably a homo- or heterotetrameric complex of pore-forming subunits.

The protein localises to the membrane. Probable inward-rectifying potassium channel. Assuming opened or closed conformations in response to the voltage difference across the membrane, the channel is activated by hyperpolarization. The polypeptide is Potassium channel AKT2 (Oryza sativa subsp. japonica (Rice)).